The sequence spans 297 residues: B-lymphocyte antigen CD20 (297 aa).

Residues 1–56 are Cytoplasmic-facing; sequence MTTPRNSVNGTFPAEPMKGPIAMQSGPKPLFRRMSSLVGPTQSFFMRESKTLGAVQ. A Phosphoserine modification is found at serine 36. Residues 57–78 form a helical membrane-spanning segment; that stretch reads IMNGLFHIALGGLLMIPAGIYA. Residues 74–80 are epitope 1; that stretch reads AGIYAPI. The Extracellular portion of the chain corresponds to 79-84; that stretch reads PICVTV. A helical transmembrane segment spans residues 85–105; sequence WYPLWGGIMYIISGSLLAATE. Topologically, residues 106 to 120 are cytoplasmic; it reads KNSRKCLVKGKMIMN. Cysteine 111 carries S-palmitoyl cysteine lipidation. A helical membrane pass occupies residues 121–141; the sequence is SLSLFAAISGMILSIMDILNI. Residues 142-188 lie on the Extracellular side of the membrane; it reads KISHFLKMESLNFIRAHTPYINIYNCEPANPSEKNSPSTQYCYSIQS. The epitope 2 stretch occupies residues 146-160; sequence FLKMESLNFIRAHTP. Residues cysteine 167 and cysteine 183 are joined by a disulfide bond. The tract at residues 168–175 is epitope 3 (recognized by antibodies, including Rituximab); the sequence is EPANPSEK. A helical membrane pass occupies residues 189–209; sequence LFLGILSVMLIFAFFQELVIA. At 210–297 the chain is on the cytoplasmic side; it reads GIVENEWKRT…SSPIENDSSP (88 aa). Cysteine 220 carries the S-palmitoyl cysteine lipid modification. Serine 225 carries the phosphoserine modification. Position 239 is a phosphothreonine (threonine 239). Residues 247–297 form a disordered region; sequence VGLTETSSQPKNEEDIEIIPIQEEEEEETETNFPEPPQDQESSPIENDSSP. Residues 260–276 are compositionally biased toward acidic residues; sequence EDIEIIPIQEEEEEETE. Polar residues predominate over residues 285-297; that stretch reads DQESSPIENDSSP.

The protein belongs to the MS4A family. Forms homotetramers. Interacts with the heavy and light chains of cell surface IgM, the antigen-binding components of the BCR. Phosphorylated on serines and threonines in resting B-cells. Protein kinase C/PKC can use CD20 as substrate. In terms of tissue distribution, expressed on B-cells.

It localises to the cell membrane. In terms of biological role, B-lymphocyte-specific membrane protein that plays a role in the regulation of cellular calcium influx necessary for the development, differentiation, and activation of B-lymphocytes. Functions as a store-operated calcium (SOC) channel component promoting calcium influx after activation by the B-cell receptor/BCR. This is B-lymphocyte antigen CD20 (MS4A1) from Homo sapiens (Human).